The primary structure comprises 310 residues: Aspartate carbamoyltransferase catalytic subunit 2 (310 aa).

Carbamoyl phosphate contacts are provided by R55 and T56. Position 85 (K85) interacts with L-aspartate. The carbamoyl phosphate site is built by R106, H134, and Q137. 2 residues coordinate L-aspartate: R167 and R228. Carbamoyl phosphate-binding residues include L266 and P267.

The protein belongs to the aspartate/ornithine carbamoyltransferase superfamily. ATCase family. As to quaternary structure, heterododecamer (2C3:3R2) of six catalytic PyrB chains organized as two trimers (C3), and six regulatory PyrI chains organized as three dimers (R2).

The enzyme catalyses carbamoyl phosphate + L-aspartate = N-carbamoyl-L-aspartate + phosphate + H(+). It functions in the pathway pyrimidine metabolism; UMP biosynthesis via de novo pathway; (S)-dihydroorotate from bicarbonate: step 2/3. Catalyzes the condensation of carbamoyl phosphate and aspartate to form carbamoyl aspartate and inorganic phosphate, the committed step in the de novo pyrimidine nucleotide biosynthesis pathway. The protein is Aspartate carbamoyltransferase catalytic subunit 2 of Shewanella halifaxensis (strain HAW-EB4).